We begin with the raw amino-acid sequence, 148 residues long: MKRIVATGTFDILHPGHIYYLEESRKLGDELHVIIARDENVRHKPKPVIPEQQRLRMVQSLKPVDYARLGSTTDIFEPIREIQPDIITLGFNQFFNEEKLKCDLEENGISAEVVRIEGYSGEGFCSSRNIMKQILIRRCKELQDDSTD.

ATP is bound by residues 9 to 10 (TF), 14 to 17 (HPGH), N92, and Y119.

Belongs to the archaeal FAD synthase family. In terms of assembly, homodimer. A divalent metal cation is required as a cofactor.

It catalyses the reaction FMN + ATP + H(+) = FAD + diphosphate. Its pathway is cofactor biosynthesis; FAD biosynthesis; FAD from FMN: step 1/1. Catalyzes the transfer of the AMP portion of ATP to flavin mononucleotide (FMN) to produce flavin adenine dinucleotide (FAD) coenzyme. This Methanolacinia petrolearia (strain DSM 11571 / OCM 486 / SEBR 4847) (Methanoplanus petrolearius) protein is FAD synthase.